The sequence spans 373 residues: MRIIVSGGGTGGHIYPALALVESLLKHEPDSKVLYIGSFRGLEGSIVPKTGLDFKQLHVQGFSRSLSLTNFKTVNLFIKAVKKSKHIIHDFKPDIVLGTGGYVSGAVLYAAQRLRIPTVINEQNSIAGVTNKFLSRGADRIAISFPHAANQFPKDKVVLTGNPRGQQVFEKKGDFSLTEFDLDPKLPTVLIFGGSGGALKLNSAVVNFANRFSEQKKFQAIFVTGRKYFDSVSNQLADLKINSSNFVVLPYLDNMDDVLPKIDLLISRSGATTLAEITALGIPSILIPSPNVTANHQEKNARQLEERGAAEVILESDLSSAMLYHDLSELLSHKSKLESMAQAAKKLGHPDAADKLYKLLVQVINERKQETTK.

Residues 10-12 (TGG), asparagine 124, serine 195, and glutamine 297 each bind UDP-N-acetyl-alpha-D-glucosamine.

This sequence belongs to the glycosyltransferase 28 family. MurG subfamily.

The protein resides in the cell membrane. It catalyses the reaction Mur2Ac(oyl-L-Ala-gamma-D-Glu-L-Lys-D-Ala-D-Ala)-di-trans,octa-cis-undecaprenyl diphosphate + UDP-N-acetyl-alpha-D-glucosamine = beta-D-GlcNAc-(1-&gt;4)-Mur2Ac(oyl-L-Ala-gamma-D-Glu-L-Lys-D-Ala-D-Ala)-di-trans,octa-cis-undecaprenyl diphosphate + UDP + H(+). The protein operates within cell wall biogenesis; peptidoglycan biosynthesis. Cell wall formation. Catalyzes the transfer of a GlcNAc subunit on undecaprenyl-pyrophosphoryl-MurNAc-pentapeptide (lipid intermediate I) to form undecaprenyl-pyrophosphoryl-MurNAc-(pentapeptide)GlcNAc (lipid intermediate II). This Oenococcus oeni (strain ATCC BAA-331 / PSU-1) protein is UDP-N-acetylglucosamine--N-acetylmuramyl-(pentapeptide) pyrophosphoryl-undecaprenol N-acetylglucosamine transferase.